The primary structure comprises 214 residues: Anti-sigma-F factor NrsF (214 aa).

Topologically, residues 1 to 25 are cytoplasmic; that stretch reads MRTDDLIDALAADAGRGTEPAPPRR. A helical transmembrane segment spans residues 26 to 46; that stretch reads LALVAGLGGVAALLLVLGWLQ. Over 47–53 the chain is Periplasmic; it reads ARPDLGQ. A helical transmembrane segment spans residues 54–74; sequence AILGPMFWVKAIYTGLLGLAG. Residues 75–90 lie on the Cytoplasmic side of the membrane; that stretch reads YLAVERLSRPGGSGRR. Residues 91-111 form a helical membrane-spanning segment; that stretch reads GWIIGAVVFGACAVAGIYQAI. The Periplasmic segment spans residues 112-134; sequence TSPDVQAALKLLHGYSWRSCSPR. Residues 135–155 form a helical membrane-spanning segment; sequence ILVLGLPMLALGLWALRGMAP. At 156–158 the chain is on the cytoplasmic side; the sequence is TRP. The chain crosses the membrane as a helical span at residues 159–179; it reads GLAGFAMGLFSGGVVATLYGL. The Periplasmic portion of the chain corresponds to 180–185; that stretch reads HCPEHT. A helical membrane pass occupies residues 186–206; that stretch reads FTFLALWYSLGVLALGLIGGW. Over 207–214 the chain is Cytoplasmic; it reads AGRWLLRW.

This sequence belongs to the NrsF anti-sigma-F factor family.

It is found in the cell inner membrane. An anti-sigma factor for extracytoplasmic function (ECF) sigma factor sigma-F (SigF), which responds to chromate and cadmium. Overexpression leads to loss of response to dichromate. ECF sigma factors are held in an inactive form by a cognate anti-sigma factor. The chain is Anti-sigma-F factor NrsF from Caulobacter vibrioides (strain NA1000 / CB15N) (Caulobacter crescentus).